The chain runs to 344 residues: KRR1 small subunit processome component homolog (344 aa).

A KH domain is found at 125 to 193; the sequence is DIIKIGNLVH…VRDIVLETMN (69 aa). Positions 232–245 are enriched in basic residues; that stretch reads NISKRKQPKVKKQK. 2 disordered regions span residues 232-260 and 273-326; these read NISK…ESKV and QEQK…TKVD. Positions 270–295 form a coiled coil; that stretch reads FLNQEQKQAKRNQGRTEKQKEAAKRQ. 2 stretches are compositionally biased toward basic and acidic residues: residues 283–302 and 315–326; these read GRTE…RNKD and RKKEDGSSTKVD.

It belongs to the KRR1 family. In terms of assembly, monomer. Component of the ribosomal small subunit (SSU) processome.

It localises to the nucleus. Its subcellular location is the nucleolus. Functionally, required for 40S ribosome biogenesis. Involved in nucleolar processing of pre-18S ribosomal RNA and ribosome assembly. Binds to RNA. Required for female germline development, cell viability during eye development and for survival of dividing cells and epithelial cells during early wing disk development. The chain is KRR1 small subunit processome component homolog from Drosophila yakuba (Fruit fly).